Consider the following 226-residue polypeptide: LysM and putative peptidoglycan-binding domain-containing protein 1 (226 aa).

2 positions are modified to phosphoserine: serine 23 and serine 33. In terms of domain architecture, LysM spans 40 to 84; it reads LEHQLEPGDTLAGLALKYGVTMEQIKRTNRLYTNDSIFLKKTLYI. Positions 95-156 are disordered; it reads NGLDSEEEND…PSHDLSASDF (62 aa). Over residues 98–107 the composition is skewed to acidic residues; sequence DSEEENDGEE. Phosphoserine is present on serine 99. A compositionally biased stretch (polar residues) spans 142–151; the sequence is QETSTPSHDL. Phosphoserine is present on residues serine 165, serine 180, serine 193, and serine 211. Residues 170–226 are disordered; it reads AAAQKLRKGESGVPEEDTGLYPSSPRMQQRAVLGPVPLTRTSRTQTLRDQEDEIFKL. Over residues 215-226 the composition is skewed to basic and acidic residues; that stretch reads TLRDQEDEIFKL.

This is LysM and putative peptidoglycan-binding domain-containing protein 1 (Lysmd1) from Mus musculus (Mouse).